Consider the following 318-residue polypeptide: Ribose-phosphate pyrophosphokinase 2 (318 aa).

96–101 (RQDKKD) is a binding site for ATP. Residues Asp-128, His-130, Asp-139, and Asp-143 each contribute to the Mg(2+) site. His-130 is a binding site for ATP. Residues 212 to 227 (KDRVAILVDDMADTCG) form a binding of phosphoribosylpyrophosphate region.

Belongs to the ribose-phosphate pyrophosphokinase family. As to quaternary structure, homodimer. The active form is probably a hexamer composed of 3 homodimers. The cofactor is Mg(2+).

It catalyses the reaction D-ribose 5-phosphate + ATP = 5-phospho-alpha-D-ribose 1-diphosphate + AMP + H(+). It participates in metabolic intermediate biosynthesis; 5-phospho-alpha-D-ribose 1-diphosphate biosynthesis; 5-phospho-alpha-D-ribose 1-diphosphate from D-ribose 5-phosphate (route I): step 1/1. Its activity is regulated as follows. Activated by magnesium and inorganic phosphate. Competitively or non-competitively inhibited by ADP, 2,3-bisphosphoglyceride or GDP. Functionally, catalyzes the synthesis of phosphoribosylpyrophosphate (PRPP) that is essential for nucleotide synthesis. The polypeptide is Ribose-phosphate pyrophosphokinase 2 (PRPS2) (Homo sapiens (Human)).